Here is a 579-residue protein sequence, read N- to C-terminus: uncharacterized protein (579 aa).

A run of 12 helical transmembrane segments spans residues A20 to I40, A54 to A74, L86 to G106, G142 to A162, W174 to I194, F204 to Q224, W234 to A254, I279 to A299, V310 to I330, P335 to C355, L366 to V386, and M467 to F487. A disordered region spans residues R516–L579. The span at P526–S540 shows a compositional bias: low complexity. The span at D570–L579 shows a compositional bias: polar residues.

The protein belongs to the major facilitator superfamily. EmrB family.

The protein localises to the cell membrane. This is an uncharacterized protein from Mycobacterium tuberculosis (strain ATCC 25618 / H37Rv).